Here is a 66-residue protein sequence, read N- to C-terminus: Large ribosomal subunit protein bL35 (66 aa).

The segment at 21–40 (KIKSTQSAKRHGMTKRSKRS) is disordered. Over residues 28 to 40 (AKRHGMTKRSKRS) the composition is skewed to basic residues.

This sequence belongs to the bacterial ribosomal protein bL35 family.

The polypeptide is Large ribosomal subunit protein bL35 (Ehrlichia canis (strain Jake)).